Consider the following 219-residue polypeptide: 2-C-methyl-D-erythritol 4-phosphate cytidylyltransferase (219 aa).

This sequence belongs to the IspD/TarI cytidylyltransferase family. IspD subfamily.

It carries out the reaction 2-C-methyl-D-erythritol 4-phosphate + CTP + H(+) = 4-CDP-2-C-methyl-D-erythritol + diphosphate. It participates in isoprenoid biosynthesis; isopentenyl diphosphate biosynthesis via DXP pathway; isopentenyl diphosphate from 1-deoxy-D-xylulose 5-phosphate: step 2/6. Its function is as follows. Catalyzes the formation of 4-diphosphocytidyl-2-C-methyl-D-erythritol from CTP and 2-C-methyl-D-erythritol 4-phosphate (MEP). The polypeptide is 2-C-methyl-D-erythritol 4-phosphate cytidylyltransferase (Endomicrobium trichonymphae).